The primary structure comprises 480 residues: Ribulose bisphosphate carboxylase large chain (480 aa).

Residues 1–2 (MS) constitute a propeptide that is removed on maturation. Proline 3 bears the N-acetylproline mark. N6,N6,N6-trimethyllysine is present on lysine 14. Positions 123 and 173 each coordinate substrate. The Proton acceptor role is filled by lysine 175. A substrate-binding site is contributed by lysine 177. Positions 201, 203, and 204 each coordinate Mg(2+). An N6-carboxylysine modification is found at lysine 201. Histidine 294 acts as the Proton acceptor in catalysis. Substrate contacts are provided by arginine 295, histidine 327, and serine 379.

This sequence belongs to the RuBisCO large chain family. Type I subfamily. In terms of assembly, heterohexadecamer of 8 large chains and 8 small chains; disulfide-linked. The disulfide link is formed within the large subunit homodimers. The cofactor is Mg(2+). The disulfide bond which can form in the large chain dimeric partners within the hexadecamer appears to be associated with oxidative stress and protein turnover.

The protein localises to the plastid. The protein resides in the chloroplast. It catalyses the reaction 2 (2R)-3-phosphoglycerate + 2 H(+) = D-ribulose 1,5-bisphosphate + CO2 + H2O. It carries out the reaction D-ribulose 1,5-bisphosphate + O2 = 2-phosphoglycolate + (2R)-3-phosphoglycerate + 2 H(+). RuBisCO catalyzes two reactions: the carboxylation of D-ribulose 1,5-bisphosphate, the primary event in carbon dioxide fixation, as well as the oxidative fragmentation of the pentose substrate in the photorespiration process. Both reactions occur simultaneously and in competition at the same active site. The polypeptide is Ribulose bisphosphate carboxylase large chain (Mollugo verticillata (Green carpetweed)).